The following is a 688-amino-acid chain: ATP-dependent RNA helicase ded1 (688 aa).

2 stretches are compositionally biased toward polar residues: residues 1–15 (MADQLSSGMGNLSID) and 55–67 (GLNNSAWAGNNNY). Residues 1-170 (MADQLSSGMG…TPDDPSKQHT (170 aa)) form a disordered region. Gly residues predominate over residues 88–102 (GFEGQQGAGWGGPRP). Residues 103–114 (QGGFNPNAYRGN) show a composition bias toward low complexity. Positions 115 to 129 (AGAGAGAGAGGGGGS) are enriched in gly residues. The Q motif signature appears at 194 to 222 (LTFSNPPLDNHLISNIQLARYNVPTPVQK). The Helicase ATP-binding domain occupies 225–416 (IPIVMGGRDL…RDFLKDYIFL (192 aa)). Position 238–245 (238–245 (AQTGSGKT)) interacts with ATP. Positions 360-363 (DEAD) match the DEAD box motif. Residues 427–587 (NITQKVEYVE…EVPAFLETIA (161 aa)) form the Helicase C-terminal domain. A disordered region spans residues 590 to 615 (SSFGGGRGGRGGGRGGGRGRTQTADY). The span at 592-608 (FGGGRGGRGGGRGGGRG) shows a compositional bias: gly residues.

It belongs to the DEAD box helicase family. DDX3/DED1 subfamily.

It localises to the cytoplasm. It carries out the reaction ATP + H2O = ADP + phosphate + H(+). Its function is as follows. ATP-binding RNA helicase involved in translation initiation. Remodels RNA in response to ADP and ATP concentrations by facilitating disruption, but also formation of RNA duplexes. This chain is ATP-dependent RNA helicase ded1 (drh-9), found in Neurospora crassa (strain ATCC 24698 / 74-OR23-1A / CBS 708.71 / DSM 1257 / FGSC 987).